We begin with the raw amino-acid sequence, 68 residues long: Venom peptide 3 (68 aa).

An N-terminal signal peptide occupies residues 1-25; it reads MTKQSIVIVLFAAIAMMACLQRVTA. 5 AXPX repeats span residues 25–28, 33–36, 37–40, 41–44, and 47–50; these read AEPA, AAPI, AEPY, ANPE, and ASPE. Positions 26–51 are excised as a propeptide; the sequence is EPAPEPIAAPIAEPYANPEAIASPEA. At L65 the chain carries Leucine amide.

As to expression, expressed by the venom gland.

The protein localises to the secreted. It is found in the target cell membrane. Functionally, antimicrobial peptide with strong activity against the fungi B.cinerea (MIC=5 uM) and C.albicans (MIC=33 uM), and no activity against the Gram-negative bacterium E.coli (MIC&gt;200 uM) and the Gram-positive bacterium S.aureus (MIC&gt;200 uM). Shows cytolytic activity against insect cell lines. Has no hemolytic activity against human erythrocytes. In vivo, peptide injection in the vicinity of the head and thorax of lepidopteran larvae induces feeding disorder that lasts one or two days before recovering. The sequence is that of Venom peptide 3 from Orancistrocerus drewseni (Solitary wasp).